The primary structure comprises 345 residues: Selenide, water dikinase (345 aa).

Residue Cys16 is part of the active site. ATP is bound by residues Lys19 and Thr45 to Glu47. Asp48 lines the Mg(2+) pocket. ATP is bound by residues Asp65, Asp88, and Gly136–Thr138. Asp88 is a binding site for Mg(2+). Asp224 lines the Mg(2+) pocket.

It belongs to the selenophosphate synthase 1 family. Class I subfamily. In terms of assembly, homodimer. Mg(2+) is required as a cofactor.

It catalyses the reaction hydrogenselenide + ATP + H2O = selenophosphate + AMP + phosphate + 2 H(+). In terms of biological role, synthesizes selenophosphate from selenide and ATP. This chain is Selenide, water dikinase, found in Aliarcobacter butzleri (strain RM4018) (Arcobacter butzleri).